The sequence spans 293 residues: Cbb3-type cytochrome c oxidase subunit FixP (293 aa).

Residues 1–11 show a composition bias toward basic and acidic residues; sequence MSTSHESHHAP. The interval 1–25 is disordered; sequence MSTSHESHHAPVDGAGGPSTTGHEW. A helical transmembrane segment spans residues 43-63; that stretch reads FYATIIWAFGYWVAYPAWPLV. Cytochrome c domains are found at residues 114 to 201 and 209 to 290; these read LARA…RSLS and PAAK…HTLG. Positions 127, 130, 131, 178, 222, 225, 226, and 267 each coordinate heme c.

This sequence belongs to the CcoP / FixP family. In terms of assembly, component of the cbb3-type cytochrome c oxidase at least composed of FixN, FixO, FixQ and FixP. Heme c is required as a cofactor.

The protein resides in the cell inner membrane. The protein operates within energy metabolism; oxidative phosphorylation. In terms of biological role, C-type cytochrome. Part of the cbb3-type cytochrome c oxidase complex. FixP subunit is required for transferring electrons from donor cytochrome c via its heme groups to FixO subunit. From there, electrons are shuttled to the catalytic binuclear center of FixN subunit where oxygen reduction takes place. The complex also functions as a proton pump. The protein is Cbb3-type cytochrome c oxidase subunit FixP of Azorhizobium caulinodans (strain ATCC 43989 / DSM 5975 / JCM 20966 / LMG 6465 / NBRC 14845 / NCIMB 13405 / ORS 571).